A 201-amino-acid polypeptide reads, in one-letter code: uncharacterized protein (201 aa).

Positions Met-1–Gly-19 are cleaved as a signal peptide.

This is an uncharacterized protein from Acheta domesticus (House cricket).